Here is a 287-residue protein sequence, read N- to C-terminus: Stomatin-like protein 3 (287 aa).

Phosphoserine is present on S3. The chain crosses the membrane as a helical; Signal-anchor for type III membrane protein span at residues 25-45 (WILFFLSFLLMLVTFPISVWM). At 46-287 (CLKIIKEYER…GNNKKVTAKA (242 aa)) the chain is on the cytoplasmic side. The residue at position 237 (S237) is a Phosphoserine.

It belongs to the band 7/mec-2 family. Homodimer. Interacts with PIEZO1 and PIEZO2. As to expression, expressed by all dorsal root ganglion neurons and is selectively expressed in neuronal tissues. Detected in olfactory epithelium.

It is found in the cell membrane. Required for the function of many mechanoreceptors. Modulate mechanotransduction channels and acid-sensing ion channels (ASIC) proteins. Potentiates PIEZO1 and PIEZO2 function by increasing their sensitivity to mechanical stimulations. The chain is Stomatin-like protein 3 (Stoml3) from Mus musculus (Mouse).